The sequence spans 648 residues: MLEAWMPKSGKPSTGTTPADFAPTQWNIIYLLMTVGSLVAALSISIQPLLLDKIFGIAFEKEGAVNADIQVVAEIVSIVCVGWFGLLSDRIGRVRIIATGFLIAVAGAAMSLLSLQIGLAFGAAGLVLFYLTRVLLTVGADTVQLQLSTLVGDVSSRANRPRLMGNLVFMMVFGGTMLSAIIMQMADYKGGVFIIMCLPLLIGIAGFQMTRESLRDVAQPQQAPTGDEHPLRQVWSVITSDPRLQLAFAAAFYTRADVIILSLFFSLWCISVSDLVGVTRTYATAHAAVMIGLLGLAVLAAIPLWRSFIERHSRISAIGASLSLAAVGYIWLGMFANPFNWLVALPLLMVGIGHAGCFVTLQVLTVDVSPKPILGAMVGAGYLVGGLGTVMLVQSGGYYFDALGPRAPFILMGTGKMLVTLYAAWLLANGIDETCDHHLKSTRKVDWKPLVFLTAALPFVWLIGRSVIEGYFSNGSLGEAPVGFVNRYLGDWAFTFLIISLSMRPVQEITGIKSLAKYRRMIGLFAFFYAVLHVLAYVTLEWALNLGDMASDIYKRPFILLGLAAFLLLIPLAFTSTNSQIKKIGGKRWKRLHRATYVINALVALHFILAANHENGEPYVYAAAVIVLLWYRFYQWRGGNVLRALRIG.

The tract at residues 1 to 431 (MLEAWMPKSG…YAAWLLANGI (431 aa)) is major facilitator domain. 18 consecutive transmembrane segments (helical) span residues 28 to 49 (IIYLLMTVGSLVAALSISIQPL), 69 to 87 (IQVVAEIVSIVCVGWFGLL), 94 to 113 (VRIIATGFLIAVAGAAMSLL), 119 to 143 (LAFGAAGLVLFYLTRVLLTVGADTV), 163 to 182 (LMGNLVFMMVFGGTMLSAII), 188 to 207 (YKGGVFIIMCLPLLIGIAGF), 252 to 273 (FYTRADVIILSLFFSLWCISVS), 285 to 305 (AHAAVMIGLLGLAVLAAIPLW), 317 to 335 (AIGASLSLAAVGYIWLGMF), 341 to 361 (WLVALPLLMVGIGHAGCFVTL), 373 to 395 (ILGAMVGAGYLVGGLGTVMLVQS), 407 to 428 (APFILMGTGKMLVTLYAAWLLA), 449 to 468 (PLVFLTAALPFVWLIGRSVI), 488 to 506 (YLGDWAFTFLIISLSMRPV), 518 to 538 (YRRMIGLFAFFYAVLHVLAYV), 558 to 574 (FILLGLAAFLLLIPLAF), 595 to 612 (ATYVINALVALHFILAAN), and 618 to 634 (PYVYAAAVIVLLWYRFY). Residues 444 to 645 (KVDWKPLVFL…WRGGNVLRAL (202 aa)) form a ferric reductase-like domain, required for correct magnetite crystal formation region.

In the N-terminal section; belongs to the major facilitator superfamily. In terms of assembly, probably interacts with FtsZ-like and MamY proteins.

The protein localises to the magnetosome membrane. In terms of biological role, required for correct biomineralization of the magnetosome; probably converts and then transports some form of iron. It is partially functionally redundant with MamH. May function with MamX, MamY amd Mms6 in biomineralization. Despite its strong similarity to MsrQ (AC V6EX82) this protein does not genetically interact with bona fide MsrP (AC V6F0A4), which is encoded elsewhere in the genome. This chain is Magnetosome protein MamZ, found in Magnetospirillum gryphiswaldense (strain DSM 6361 / JCM 21280 / NBRC 15271 / MSR-1).